Reading from the N-terminus, the 419-residue chain is Bilin biosynthesis protein CpeY (419 aa).

Functionally, involved in the biosynthesis of bilin. This chain is Bilin biosynthesis protein CpeY (cpeY), found in Synechococcus sp. (strain WH8020).